A 515-amino-acid chain; its full sequence is Putative ribose/galactose/methyl galactoside import ATP-binding protein (515 aa).

2 ABC transporter domains span residues Leu-26–Glu-262 and Val-272–Asp-511. Gly-58–Ser-65 provides a ligand contact to ATP.

It belongs to the ABC transporter superfamily. Carbohydrate importer 2 (CUT2) (TC 3.A.1.2) family.

It localises to the cell inner membrane. The catalysed reaction is D-ribose(out) + ATP + H2O = D-ribose(in) + ADP + phosphate + H(+). The enzyme catalyses D-galactose(out) + ATP + H2O = D-galactose(in) + ADP + phosphate + H(+). Functionally, part of an ABC transporter complex involved in carbohydrate import. Could be involved in ribose, galactose and/or methyl galactoside import. Responsible for energy coupling to the transport system. The chain is Putative ribose/galactose/methyl galactoside import ATP-binding protein from Hahella chejuensis (strain KCTC 2396).